Here is a 311-residue protein sequence, read N- to C-terminus: Protease HtpX homolog 1 (311 aa).

2 consecutive transmembrane segments (helical) span residues 12–32 and 35–55; these read VISL…IASL and ISLF…WIIS. Position 137 (H137) interacts with Zn(2+). The active site involves E138. Zn(2+) is bound at residue H141. 2 helical membrane passes run 159–179 and 184–204; these read VLGY…FLAA and LLFA…TFIL. E216 contributes to the Zn(2+) binding site.

This sequence belongs to the peptidase M48B family. Requires Zn(2+) as cofactor.

It localises to the cell membrane. The sequence is that of Protease HtpX homolog 1 from Saccharolobus solfataricus (strain ATCC 35092 / DSM 1617 / JCM 11322 / P2) (Sulfolobus solfataricus).